The following is a 642-amino-acid chain: LIM domain kinase 2 (642 aa).

2 LIM zinc-binding domains span residues 12 to 63 (CLGC…CHKD) and 72 to 124 (CHGC…CGKC). The PDZ domain occupies 152–239 (LISMPAATDG…TLQLLIEHDP (88 aa)). Residues 282 to 304 (RSLRRSNSISKSPGPSSPKEPLL) are disordered. Low complexity predominate over residues 286–304 (RSNSISKSPGPSSPKEPLL). The Protein kinase domain maps to 331–608 (LIHGEVLGKG…DSFEALSLYL (278 aa)). ATP-binding positions include 337-345 (LGKGFFGQA) and Lys360. Asp451 is a catalytic residue. Thr505 carries the phosphothreonine modification.

It belongs to the protein kinase superfamily. TKL Ser/Thr protein kinase family. Binds ROCK1 and LKAP. As to expression, expressed predominantly in the lung, and faintly in the kidney, liver, brain, spleen, gizzard, and intestine.

It is found in the cytoplasm. Its subcellular location is the cytoskeleton. The protein localises to the spindle. The protein resides in the microtubule organizing center. It localises to the centrosome. The catalysed reaction is L-seryl-[protein] + ATP = O-phospho-L-seryl-[protein] + ADP + H(+). It carries out the reaction L-threonyl-[protein] + ATP = O-phospho-L-threonyl-[protein] + ADP + H(+). Functionally, serine/threonine-protein kinase that plays an essential role in the regulation of actin filament dynamics. Acts downstream of several Rho family GTPase signal transduction pathways. Involved in astral microtubule organization and mitotic spindle orientation during early stages of mitosis by mediating phosphorylation of TPPP. The chain is LIM domain kinase 2 (LIMK2) from Gallus gallus (Chicken).